A 501-amino-acid polypeptide reads, in one-letter code: Cytochrome P450 4c21 (501 aa).

Heme contacts are provided by Glu-309 and Cys-447.

It belongs to the cytochrome P450 family. Heme is required as a cofactor.

The protein localises to the endoplasmic reticulum membrane. It is found in the microsome membrane. The catalysed reaction is an organic molecule + reduced [NADPH--hemoprotein reductase] + O2 = an alcohol + oxidized [NADPH--hemoprotein reductase] + H2O + H(+). This is Cytochrome P450 4c21 (CYP4C21) from Blattella germanica (German cockroach).